We begin with the raw amino-acid sequence, 280 residues long: MTWKIVTDSGCDLRSLTRQSKELRFERVPLTLQIGTEIFRDDDGLDIDNMMTTMYQSSKATTSSCPSPEAFLQAYRGSDNVIVMTITGTLSGSHNSARLAKNELLEENPNVNIHLIDSLSAGGEMDLLVLELERLINLGLSFEEVVKQITAYQQKTRLIFVLAKVDNLVKNGRLSKLVGKVIGLLNIRMVGKASNKGTLELLQKARGQKKAVSALIEEIQKEGYVGGKVYIAHAQNPKICEQISEKIKSLYPDAVIQTGRTSGLCSFYAEDGGLLMGYEI.

Residues 3-280 (WKIVTDSGCD…DGGLLMGYEI (278 aa)) enclose the DegV domain. Hexadecanoate is bound by residues Ser63 and Ser91.

Its function is as follows. May bind long-chain fatty acids, such as palmitate, and may play a role in lipid transport or fatty acid metabolism. The sequence is that of DegV domain-containing protein spyM18_1709 from Streptococcus pyogenes serotype M18 (strain MGAS8232).